The primary structure comprises 77 residues: Conotoxin VnMEKL-0223 (77 aa).

An N-terminal signal peptide occupies residues 1-19 (MQKLTILLLVAAVLMSTQA). The propeptide occupies 20 to 37 (LIKGGGEKRPKEKIKFLS). 3 disulfide bridges follow: Cys-51–Cys-65, Cys-58–Cys-69, and Cys-64–Cys-74.

Belongs to the conotoxin O2 superfamily. Expressed by the venom duct.

It is found in the secreted. The polypeptide is Conotoxin VnMEKL-0223 (Conus ventricosus (Mediterranean cone)).